We begin with the raw amino-acid sequence, 220 residues long: Probable chemoreceptor glutamine deamidase CheD (220 aa).

It belongs to the CheD family.

It catalyses the reaction L-glutaminyl-[protein] + H2O = L-glutamyl-[protein] + NH4(+). Functionally, probably deamidates glutamine residues to glutamate on methyl-accepting chemotaxis receptors (MCPs), playing an important role in chemotaxis. This is Probable chemoreceptor glutamine deamidase CheD from Cupriavidus metallidurans (strain ATCC 43123 / DSM 2839 / NBRC 102507 / CH34) (Ralstonia metallidurans).